The sequence spans 409 residues: Mitochondrial protein import protein MAS5 (409 aa).

The segment at 1–172 (MVKETKFYDI…NGQGIKFVTR (172 aa)) is necessary for HAP1 repression in the absence of heme. In terms of domain architecture, J spans 4-72 (ETKFYDILGV…RDIYDQFGED (69 aa)). Substrate-binding positions include Ile116 and 135 to 137 (LAL). The CR-type zinc-finger motif lies at 130–213 (GRTAKLALNK…CNGKKVENER (84 aa)). Positions 143, 146, 159, 162, 185, and 188 each coordinate Zn(2+). CXXCXGXG motif repeat units follow at residues 143–150 (CKECEGRG), 159–166 (CTSCNGQG), and 185–192 (CDVCHGTG). Lys198 is covalently cross-linked (Glycyl lysine isopeptide (Lys-Gly) (interchain with G-Cter in ubiquitin)). 2 residues coordinate Zn(2+): Cys201 and Cys204. A CXXCXGXG motif repeat occupies 201–208 (CKSCNGKK). Residues 215 to 216 (IL) and 247 to 249 (VVF) contribute to the substrate site. The disordered stretch occupies residues 382 to 409 (RTRASRGGANYDSDEEEQGGEGVQCASQ). A Cysteine methyl ester modification is found at Cys406. Cys406 carries the S-farnesyl cysteine lipid modification. Residues 407–409 (ASQ) constitute a propeptide, removed in mature form.

In terms of assembly, homodimer. Interacts with HAP1. Component of the HMC including HAP1, SRO9 and YDJ1.

It is found in the cytoplasm. The protein resides in the perinuclear region. Its function is as follows. Probably involved in mitochondrial protein import. Is also required for efficient translocation of pre-pro-alpha-factor. Involved in heme regulation of HAP1, as a component of the high-molecular-weight (HMC) complex. The polypeptide is Mitochondrial protein import protein MAS5 (YDJ1) (Saccharomyces cerevisiae (strain ATCC 204508 / S288c) (Baker's yeast)).